Reading from the N-terminus, the 802-residue chain is LPS-assembly protein LptD (802 aa).

Positions 1–25 are cleaved as a signal peptide; sequence MARLFSLKPLVLALGLCFGTHCAAA.

Belongs to the LptD family. As to quaternary structure, component of the lipopolysaccharide transport and assembly complex. Interacts with LptE and LptA.

Its subcellular location is the cell outer membrane. Together with LptE, is involved in the assembly of lipopolysaccharide (LPS) at the surface of the outer membrane. The sequence is that of LPS-assembly protein LptD from Neisseria meningitidis serogroup B (strain ATCC BAA-335 / MC58).